A 142-amino-acid chain; its full sequence is Type IV pilus subunit protein TapA (142 aa).

Positions 1-6 are cleaved as a propeptide — leader sequence; sequence MKKQSG. Position 7 is an N-methylphenylalanine (F7). The chain crosses the membrane as a helical span at residues 7–27; the sequence is FTLIELMIVVAIVAILAAIAL.

It belongs to the N-Me-Phe pilin family.

The protein localises to the membrane. Its function is as follows. Major component of the type IV (TAP) pilus. Aeromonas hydrophila possesses two distinct families of type IV pili: the bundle-forming pilus (Bfp) and the type IV pilus (Tap). The protein is Type IV pilus subunit protein TapA (tapA) of Aeromonas hydrophila.